The following is a 357-amino-acid chain: Probable xyloglucan endotransglucosylase/hydrolase protein 29 (357 aa).

Positions 1 to 31 are cleaved as a signal peptide; it reads MRDSIYLLWIDNRLVVIIMMVMMVSCRCVLG. In terms of domain architecture, GH16 spans 32 to 232; sequence LENINPIFFD…YTFSPFVSEF (201 aa). Glutamate 117 serves as the catalytic Nucleophile. Glutamate 121 (proton donor) is an active-site residue. Residues glutamate 121 and 134-136 each bind xyloglucan; that span reads QTN. Asparagine 140 is a glycosylation site (N-linked (GlcNAc...) asparagine). Xyloglucan contacts are provided by residues 144-148, 211-212, and glycine 216; these read NRGRE and SW. N-linked (GlcNAc...) asparagine glycosylation is found at asparagine 241 and asparagine 262. Residues cysteine 299 and cysteine 312 are joined by a disulfide bond. Xyloglucan is bound at residue arginine 304. Residues 326-357 form a disordered region; the sequence is GRLKFGGSHPKVHKARKKRRRNRSTPVVSADL. Over residues 335–348 the composition is skewed to basic residues; the sequence is PKVHKARKKRRRNR. Asparagine 347 carries an N-linked (GlcNAc...) asparagine glycan.

It belongs to the glycosyl hydrolase 16 family. XTH group 3 subfamily. In terms of processing, contains at least one intrachain disulfide bond essential for its enzymatic activity.

Its subcellular location is the secreted. The protein localises to the cell wall. It is found in the extracellular space. It localises to the apoplast. The catalysed reaction is breaks a beta-(1-&gt;4) bond in the backbone of a xyloglucan and transfers the xyloglucanyl segment on to O-4 of the non-reducing terminal glucose residue of an acceptor, which can be a xyloglucan or an oligosaccharide of xyloglucan.. Catalyzes xyloglucan endohydrolysis (XEH) and/or endotransglycosylation (XET). Cleaves and religates xyloglucan polymers, an essential constituent of the primary cell wall, and thereby participates in cell wall construction of growing tissues. This chain is Probable xyloglucan endotransglucosylase/hydrolase protein 29 (XTH29), found in Arabidopsis thaliana (Mouse-ear cress).